Consider the following 91-residue polypeptide: DNA-directed RNA polymerase subunit Rpo5 (91 aa).

The protein belongs to the archaeal Rpo5/eukaryotic RPB5 RNA polymerase subunit family. Part of the RNA polymerase complex.

The protein resides in the cytoplasm. It carries out the reaction RNA(n) + a ribonucleoside 5'-triphosphate = RNA(n+1) + diphosphate. Its function is as follows. DNA-dependent RNA polymerase (RNAP) catalyzes the transcription of DNA into RNA using the four ribonucleoside triphosphates as substrates. The protein is DNA-directed RNA polymerase subunit Rpo5 of Staphylothermus marinus (strain ATCC 43588 / DSM 3639 / JCM 9404 / F1).